The chain runs to 138 residues: MLGTQTTNSKPREYGGLIVSTIYIVLFFAILNLTVFFNKTNNINLILKNSCVVSFVVVWLLVCLQGIVRLKTCDGARYEISKFNQYLKLGSIYAKPNISFDEYKAKSSSYRKQTRGFWWMNFSLYLLGSLISIVVSLL.

The next 3 helical transmembrane spans lie at 17–37 (LIVS…TVFF), 43–63 (INLI…LLVC), and 117–137 (FWWM…VVSL).

The protein localises to the cell membrane. This is an uncharacterized protein from Mycoplasma pneumoniae (strain ATCC 29342 / M129 / Subtype 1) (Mycoplasmoides pneumoniae).